The chain runs to 242 residues: Segregation and condensation protein A (242 aa).

This sequence belongs to the ScpA family. In terms of assembly, component of a cohesin-like complex composed of ScpA, ScpB and the Smc homodimer, in which ScpA and ScpB bind to the head domain of Smc. The presence of the three proteins is required for the association of the complex with DNA.

It localises to the cytoplasm. Participates in chromosomal partition during cell division. May act via the formation of a condensin-like complex containing Smc and ScpB that pull DNA away from mid-cell into both cell halves. The sequence is that of Segregation and condensation protein A from Streptococcus pneumoniae (strain Taiwan19F-14).